The primary structure comprises 441 residues: Probable D-serine dehydratase (441 aa).

The residue at position 117 (K117) is an N6-(pyridoxal phosphate)lysine.

Belongs to the serine/threonine dehydratase family. DsdA subfamily. Pyridoxal 5'-phosphate is required as a cofactor.

The enzyme catalyses D-serine = pyruvate + NH4(+). The chain is Probable D-serine dehydratase from Acinetobacter baylyi (strain ATCC 33305 / BD413 / ADP1).